We begin with the raw amino-acid sequence, 157 residues long: GDP-mannose mannosyl hydrolase (157 aa).

Substrate-binding positions include 2-3 (FL), F8, and R36. The region spanning 3-153 (LRQEDFAAVV…SRAYFSPDAP (151 aa)) is the Nudix hydrolase domain. 3 residues coordinate Mg(2+): G49, E69, and Q122. The Nudix box signature appears at 50 to 71 (GRVCKDETLEAAFARLTQAELG).

Belongs to the Nudix hydrolase family. As to quaternary structure, homodimer. Mg(2+) is required as a cofactor.

It catalyses the reaction GDP-alpha-D-mannose + H2O = D-mannose + GDP + H(+). Its function is as follows. Hydrolyzes GDP-mannose. The sequence is that of GDP-mannose mannosyl hydrolase from Salmonella typhi.